The chain runs to 180 residues: Ribosome-recycling factor (180 aa).

It belongs to the RRF family.

The protein resides in the cytoplasm. In terms of biological role, responsible for the release of ribosomes from messenger RNA at the termination of protein biosynthesis. May increase the efficiency of translation by recycling ribosomes from one round of translation to another. This is Ribosome-recycling factor from Chlamydia abortus (strain DSM 27085 / S26/3) (Chlamydophila abortus).